A 180-amino-acid polypeptide reads, in one-letter code: uncharacterized protein (180 aa).

This is an uncharacterized protein from Dictyostelium discoideum (Social amoeba).